A 304-amino-acid chain; its full sequence is MESRGLVTAVSLTLSICSLLLLVTAIFTDHWYETDTRKHKEMCDSQGNSDPTEQKNRLMPLYQLPFRGDPSNTRRLGLLSPAPAGGVREPEDLLENWRSLLGLGVLESDCGRPLFSTYSGLWRKCYIMGIDKDIDSLIIKGIAQKCTAIKYHFSHPIRLRNIPFNLTRAIQQDEWHLLHLRRITAGFLGMAAAVLLCGCIVAAISFFWEESLTQHVAGLLFLMTGIFCTISLCTYAASVAYELNRQPKFIYGLPSDVEHGYSWSLFCAWCSLGLIVAAGCLCTAYPFISRTKILHLKFARDSCV.

Residues 1–25 (MESRGLVTAVSLTLSICSLLLLVTA) form the signal peptide. The Extracellular portion of the chain corresponds to 26-186 (IFTDHWYETD…LLHLRRITAG (161 aa)). Residue N165 is glycosylated (N-linked (GlcNAc...) asparagine). A helical transmembrane segment spans residues 187 to 207 (FLGMAAAVLLCGCIVAAISFF). Over 208–215 (WEESLTQH) the chain is Cytoplasmic. The helical transmembrane segment at 216–236 (VAGLLFLMTGIFCTISLCTYA) threads the bilayer. Residues 237-267 (ASVAYELNRQPKFIYGLPSDVEHGYSWSLFC) are Extracellular-facing. The chain crosses the membrane as a helical span at residues 268 to 288 (AWCSLGLIVAAGCLCTAYPFI). The Cytoplasmic segment spans residues 289–304 (SRTKILHLKFARDSCV).

This sequence belongs to the TMEM178 family.

The protein resides in the endoplasmic reticulum membrane. In terms of biological role, may act as a negative regulator of osteoclast differentiation. In Xenopus laevis (African clawed frog), this protein is Transmembrane protein 178A (tmem178a).